The primary structure comprises 86 residues: Small ribosomal subunit protein bS16 (86 aa).

It belongs to the bacterial ribosomal protein bS16 family.

This chain is Small ribosomal subunit protein bS16, found in Borreliella afzelii (strain PKo) (Borrelia afzelii).